A 396-amino-acid polypeptide reads, in one-letter code: Purine ribonucleoside efflux pump NepI (396 aa).

The Cytoplasmic segment spans residues 1–21; sequence MSEFIAENRGADAITRPNWSA. Residues 22–42 traverse the membrane as a helical segment; the sequence is VFSVAFCVACLIIVEFLPVSL. Residues 43–54 are Periplasmic-facing; the sequence is LTPMAQDLGISE. Residues 55–75 form a helical membrane-spanning segment; the sequence is GVAGQSVTVTAFVAMFASLFI. The Cytoplasmic portion of the chain corresponds to 76 to 85; that stretch reads TQTIQATDRR. A helical membrane pass occupies residues 86–106; the sequence is NVVILFAVLLTLSCLLVSFAN. Residue Ser-107 is a topological domain, periplasmic. Residues 108 to 128 form a helical membrane-spanning segment; sequence FSLLLIGRACLGLALGGFWAM. Residues 129-147 lie on the Cytoplasmic side of the membrane; sequence SASLTMRLVPPRTVPKALS. A helical membrane pass occupies residues 148–168; that stretch reads VIFGAVSIALVIAAPLGSFLG. The Periplasmic segment spans residues 169–175; the sequence is ELIGWRN. The chain crosses the membrane as a helical span at residues 176–196; it reads VFNAAAVMGVLCIFWIIKSLP. At 197–215 the chain is on the cytoplasmic side; that stretch reads SLPGEPSHQKQNTFRLLQR. A helical membrane pass occupies residues 216–236; that stretch reads PGVMAGMIAIFMSFAGQFAFF. The Periplasmic portion of the chain corresponds to 237-255; the sequence is TYIRPVYMNLAGFSVDGLT. The helical transmembrane segment at 256-276 threads the bilayer; it reads LVLLSFGIASFIGTSLSSFIL. The Cytoplasmic segment spans residues 277–281; sequence KRSVK. A helical transmembrane segment spans residues 282–302; the sequence is LALAGAPLILAVSALVLTLWG. Residues 303-305 lie on the Periplasmic side of the membrane; it reads SDK. A helical transmembrane segment spans residues 306–326; the sequence is IVATGVAIIWGLTFALVPVGW. At 327–343 the chain is on the cytoplasmic side; sequence STWITRSLADQAEKAGS. Residues 344–364 traverse the membrane as a helical segment; that stretch reads IQVAVIQLANTCGAAIGGYAL. Residues 365 to 366 lie on the Periplasmic side of the membrane; sequence DN. The helical transmembrane segment at 367–387 threads the bilayer; the sequence is IGLTSPLMFSGTLMLLTALLV. Residues 388–396 lie on the Cytoplasmic side of the membrane; sequence TAKVKMKKS.

This sequence belongs to the major facilitator superfamily. DHA1 family. NepI (TC 2.A.1.2.26) subfamily.

Its subcellular location is the cell inner membrane. The enzyme catalyses inosine(in) + H(+)(out) = inosine(out) + H(+)(in). It carries out the reaction guanosine(in) + H(+)(out) = guanosine(out) + H(+)(in). Involved in the efflux of purine ribonucleosides, such as inosine and guanosine. In Shigella sonnei (strain Ss046), this protein is Purine ribonucleoside efflux pump NepI.